The chain runs to 107 residues: Universal stress protein B homolog (107 aa).

Transmembrane regions (helical) follow at residues 6–26 and 86–106; these read IILF…LTAL and VREL…AAFL.

This sequence belongs to the universal stress protein B family.

Its subcellular location is the cell inner membrane. The polypeptide is Universal stress protein B homolog (Vibrio vulnificus (strain CMCP6)).